The sequence spans 414 residues: Arrestin domain-containing protein 3 (414 aa).

2 short sequence motifs (PPxY motif) span residues 346–349 (PPSY) and 391–394 (PPLY). A disordered region spans residues 393–414 (LYSEIDPNPDQSADDRPSCPSR). Over residues 405–414 (ADDRPSCPSR) the composition is skewed to basic and acidic residues.

Belongs to the arrestin family. As to quaternary structure, interacts (via PPxY motifs) with NEDD4 (via WW domains). Interacts with ADRB2. Interacts with ADRB3. Interacts with HGS (via PPxY motifs). Does not bind TXN (thioredoxin). Interacts with ITCH. Interacts with WWP1 (via WW domains). In terms of tissue distribution, highly expressed in skeletal muscle, placenta, kidney, lung, liver, blood, adrenal gland, lymph node, mammary gland, thyroid, and trachea. Very low levels in colon, thymus, spleen, small intestine, bladder and bone marrow. Strong expression in differentiated adipocytes compared to preadipocytes. Detected in omental fat and subcutaneous fat tissue.

Its subcellular location is the cytoplasm. The protein resides in the cell membrane. It localises to the lysosome. The protein localises to the endosome. It is found in the early endosome. Its function is as follows. Adapter protein that plays a role in regulating cell-surface expression of adrenergic receptors and probably also other G protein-coupled receptors. Plays a role in NEDD4-mediated ubiquitination and endocytosis af activated ADRB2 and subsequent ADRB2 degradation. May recruit NEDD4 to ADRB2. Alternatively, may function as adapter protein that does not play a major role in recruiting NEDD4 to ADRB2, but rather plays a role in a targeting ADRB2 to endosomes. In Homo sapiens (Human), this protein is Arrestin domain-containing protein 3 (ARRDC3).